Reading from the N-terminus, the 370-residue chain is MASRKLLLLPGDGIGPEAMAEVRKVIAFLNSDLNLGFETEEGLVGGCAYDAHGQAISDADMEKALAADSVLFGAVGGPKWDSVPYEVRPEAGLLRLRKDMQLYANLRPAICYPALAHSSSLKPEVIEGLDILILRELTGGVYFGEPKEIIDLGNGQKRGIDTQVYDTYEIERIADVAFELARTRRNKVTSMEKRNVMKSGVLWNQGVTARHKEKHADVQLEHMLADAGGMQLVRWPKQFDVILTDNLFGDLLSDVAAMLTGSLGMLPSASLGAADSKTGKRKALYEPVHGSAPDIAGKGIANPIAMIASLAMCLRYSFGLVAEADRLEAAIAGVLDDGIRTADIWSEGNTKVGTTEMGDAILAKFKALSA.

77-90 (GPKWDSVPYEVRPE) lines the NAD(+) pocket. 4 residues coordinate substrate: arginine 97, arginine 107, arginine 135, and aspartate 226. Positions 226, 250, and 254 each coordinate Mg(2+). 290–302 (GSAPDIAGKGIAN) contributes to the NAD(+) binding site.

The protein belongs to the isocitrate and isopropylmalate dehydrogenases family. LeuB type 1 subfamily. Homodimer. The cofactor is Mg(2+). Mn(2+) serves as cofactor.

Its subcellular location is the cytoplasm. The catalysed reaction is (2R,3S)-3-isopropylmalate + NAD(+) = 4-methyl-2-oxopentanoate + CO2 + NADH. Its pathway is amino-acid biosynthesis; L-leucine biosynthesis; L-leucine from 3-methyl-2-oxobutanoate: step 3/4. In terms of biological role, catalyzes the oxidation of 3-carboxy-2-hydroxy-4-methylpentanoate (3-isopropylmalate) to 3-carboxy-4-methyl-2-oxopentanoate. The product decarboxylates to 4-methyl-2 oxopentanoate. This chain is 3-isopropylmalate dehydrogenase, found in Brucella abortus (strain 2308).